A 660-amino-acid polypeptide reads, in one-letter code: MNPDLRRERDSASFNPELLTHILDGSPEKTRRRREIENMILNDPDFQHEDLNFLTRSQRYEVAVRKSAIMVKKMREFGIADPDEIMWFKKLHLVNFVEPVGLNYSMFIPTLLNQGTTAQKEKWLLSSKGLQIIGTYAQTEMGHGTHLRGLETTATYDPETQEFILNSPTVTSIKWWPGGLGKTSNHAIVLAQLITKGKGYGLHAFIVPIREIGTHKPLPGITVGDIGPKFGYDEIDNGYLKMDNYRIPRENMLMKYAQVKPDGTYVKPLSNKLTYGTMVFVRSFLVGEAARALSKACTIAIRYSAVRHQSEIKPGEPEPQILDFQTQQYKLFPLLATAYAFQFVGAYMKETYHRINEGIGQGDLSELPELHALTAGLKAFTSWTANTGIEACRMACGGHGYSHCSGLPNIYVNFTPSCTFEGENTVMMLQTARFLMKSYDQVHSGKLVCGMVSYLNDLPSQRIQPQQVAVWPTMVDIHSPESLTEAYKLRAARLVEIAAKNLQKEVIHRKSKEVAWNLTSVDLVRASEAHCHYVVVKLFSEKLLKIQDKAIQAVLRNLCLLYSLYGISQNAGDFLQGSIMTEPQITQVNQRVKELLTLIRSDAVALVDAFDFQDVTLGSVLGRYDGNVYENLFEWAKNSPLNKAEVHESYKHLKSLQSKL.

Serine 26 bears the Phosphoserine mark. Residues lysine 89 and lysine 90 each carry the N6-succinyllysine modification. FAD is bound by residues threonine 139 and glycine 178. Position 216 is an N6-acetyllysine (lysine 216). Lysine 241 is subject to N6-succinyllysine. Residues lysine 255, lysine 267, and lysine 272 each carry the N6-acetyllysine modification. Lysine 349 is subject to N6-succinyllysine. Glutamate 421 serves as the catalytic Proton acceptor. N6-acetyllysine; alternate is present on residues lysine 437 and lysine 446. Residues lysine 437 and lysine 446 each carry the N6-succinyllysine; alternate modification. At lysine 500 the chain carries N6-acetyllysine. N6-acetyllysine; alternate is present on lysine 512. Lysine 512 carries the N6-succinyllysine; alternate modification. At lysine 542 the chain carries N6-succinyllysine. Residue lysine 637 is modified to N6-acetyllysine; alternate. Lysine 637 is subject to N6-succinyllysine; alternate. Lysine 643 bears the N6-succinyllysine mark. A Phosphoserine modification is found at serine 649. At lysine 651 the chain carries N6-acetyllysine. N6-succinyllysine is present on lysine 654. The Microbody targeting signal signature appears at 658 to 660 (SKL).

It belongs to the acyl-CoA oxidase family. As to quaternary structure, homodimer. Interacts with LONP2. FAD is required as a cofactor.

The protein localises to the peroxisome. The enzyme catalyses a 2,3-saturated acyl-CoA + O2 = a (2E)-enoyl-CoA + H2O2. It carries out the reaction hexadecanoyl-CoA + O2 = (2E)-hexadecenoyl-CoA + H2O2. It catalyses the reaction dodecanoyl-CoA + O2 = (2E)-dodecenoyl-CoA + H2O2. The catalysed reaction is octanoyl-CoA + O2 = (2E)-octenoyl-CoA + H2O2. The enzyme catalyses decanoyl-CoA + O2 = (2E)-decenoyl-CoA + H2O2. It carries out the reaction tetradecanoyl-CoA + O2 = (2E)-tetradecenoyl-CoA + H2O2. It catalyses the reaction hexadecanedioyl-CoA + O2 = (2E)-hexadecenedioyl-CoA + H2O2. The catalysed reaction is tetracosanoyl-CoA + O2 = (2E)-tetracosenoyl-CoA + H2O2. The enzyme catalyses glutaryl-CoA + O2 = (2E)-glutaconyl-CoA + H2O2. It carries out the reaction hexanoyl-CoA + O2 = (2E)-hexenoyl-CoA + H2O2. It catalyses the reaction octadecanoyl-CoA + O2 = (2E)-octadecenoyl-CoA + H2O2. The catalysed reaction is (5Z,8Z,11Z,14Z,17Z)-eicosapentaenoyl-CoA + O2 = (2E,5Z,8Z,11Z,14Z,17Z)-icosahexaenoyl-CoA + H2O2. The enzyme catalyses (6Z,9Z,12Z,15Z,18Z,21Z)-tetracosahexaenoyl-CoA + O2 = (2E,6Z,9Z,12Z,15Z,18Z,21Z)-tetracosaheptaenoyl-CoA + H2O2. Its pathway is lipid metabolism; peroxisomal fatty acid beta-oxidation. Functionally, involved in the initial and rate-limiting step of peroxisomal beta-oxidation of straight-chain saturated and unsaturated very-long-chain fatty acids. Catalyzes the desaturation of fatty acyl-CoAs such as palmitoyl-CoA (hexadecanoyl-CoA) to 2-trans-enoyl-CoAs ((2E)-enoyl-CoAs) such as (2E)-hexadecenoyl-CoA, and donates electrons directly to molecular oxygen (O(2)), thereby producing hydrogen peroxide (H(2)O(2)). Shows highest activity against medium-chain fatty acyl-CoAs. Shows optimum activity with a chain length of 10 carbons (decanoyl-CoA) in vitro. Its function is as follows. Is active against a much broader range of substrates and shows activity towards long-chain acyl-CoAs. In Pongo abelii (Sumatran orangutan), this protein is Peroxisomal acyl-coenzyme A oxidase 1.